The chain runs to 366 residues: Variable large protein 10 (366 aa).

Residues Met-1–Ser-18 form the signal peptide. The N-palmitoyl cysteine moiety is linked to residue Cys-19. Cys-19 carries the S-diacylglycerol cysteine lipid modification.

It belongs to the variable large protein (Vlp) family. Beta subfamily.

Its subcellular location is the cell outer membrane. The Vlp and Vsp proteins are antigenically distinct proteins, only one vlp or vsp gene is transcriptionally active at any one time. Switching between these genes is a mechanism of host immune response evasion. The sequence is that of Variable large protein 10 from Borrelia hermsii.